The following is a 390-amino-acid chain: L-rhamnonate dehydratase (390 aa).

His19 and Arg45 together coordinate substrate. The Mg(2+) site is built by Asp211, Glu237, and Glu265. The active-site Proton acceptor is His315. Residue Glu335 coordinates substrate.

It belongs to the mandelate racemase/muconate lactonizing enzyme family. RhamD subfamily. Requires Mg(2+) as cofactor.

It carries out the reaction L-rhamnonate = 2-dehydro-3-deoxy-L-rhamnonate + H2O. In terms of biological role, catalyzes the dehydration of L-rhamnonate to 2-keto-3-deoxy-L-rhamnonate (KDR). The protein is L-rhamnonate dehydratase of Saccharopolyspora erythraea (strain ATCC 11635 / DSM 40517 / JCM 4748 / NBRC 13426 / NCIMB 8594 / NRRL 2338).